The sequence spans 257 residues: Homeobox protein goosecoid (257 aa).

A DNA-binding region (homeobox) is located at residues 160 to 219; that stretch reads KRRHRTIFTDEQLEALENLFQETKYPDVGTREQLARKVHLREEKVEVWFKNRRAKWRRQK. Residues 213-257 are disordered; that stretch reads AKWRRQKRSSSEESENAEKWNKTSSSKASPEKREEEGKSDLDSDS. Basic and acidic residues predominate over residues 241 to 257; the sequence is SPEKREEEGKSDLDSDS.

This sequence belongs to the paired homeobox family. Bicoid subfamily.

It localises to the nucleus. Its function is as follows. Regulates chordin (CHRD). May play a role in spatial programing within discrete embryonic fields or lineage compartments during organogenesis. In concert with NKX3-2, plays a role in defining the structural components of the middle ear; required for the development of the entire tympanic ring. Probably involved in the regulatory networks that define neural crest cell fate specification and determine mesoderm cell lineages in mammals. The protein is Homeobox protein goosecoid (GSC) of Gorilla gorilla gorilla (Western lowland gorilla).